Here is a 428-residue protein sequence, read N- to C-terminus: Tol-Pal system protein TolB (428 aa).

The N-terminal stretch at 1–23 (MRRLYQTVCTLALLLVGLQAAHA) is a signal peptide.

It belongs to the TolB family. As to quaternary structure, the Tol-Pal system is composed of five core proteins: the inner membrane proteins TolA, TolQ and TolR, the periplasmic protein TolB and the outer membrane protein Pal. They form a network linking the inner and outer membranes and the peptidoglycan layer.

The protein resides in the periplasm. Its function is as follows. Part of the Tol-Pal system, which plays a role in outer membrane invagination during cell division and is important for maintaining outer membrane integrity. This is Tol-Pal system protein TolB from Alkalilimnicola ehrlichii (strain ATCC BAA-1101 / DSM 17681 / MLHE-1).